A 474-amino-acid chain; its full sequence is ATP synthase subunit beta (474 aa).

152–159 (GGAGVGKT) lines the ATP pocket.

This sequence belongs to the ATPase alpha/beta chains family. In terms of assembly, F-type ATPases have 2 components, CF(1) - the catalytic core - and CF(0) - the membrane proton channel. CF(1) has five subunits: alpha(3), beta(3), gamma(1), delta(1), epsilon(1). CF(0) has three main subunits: a(1), b(2) and c(9-12). The alpha and beta chains form an alternating ring which encloses part of the gamma chain. CF(1) is attached to CF(0) by a central stalk formed by the gamma and epsilon chains, while a peripheral stalk is formed by the delta and b chains.

The protein resides in the cell inner membrane. The enzyme catalyses ATP + H2O + 4 H(+)(in) = ADP + phosphate + 5 H(+)(out). Functionally, produces ATP from ADP in the presence of a proton gradient across the membrane. The catalytic sites are hosted primarily by the beta subunits. The sequence is that of ATP synthase subunit beta from Magnetococcus marinus (strain ATCC BAA-1437 / JCM 17883 / MC-1).